A 478-amino-acid polypeptide reads, in one-letter code: Proline--tRNA ligase (478 aa).

Belongs to the class-II aminoacyl-tRNA synthetase family. ProS type 3 subfamily. Homodimer.

It localises to the cytoplasm. It catalyses the reaction tRNA(Pro) + L-proline + ATP = L-prolyl-tRNA(Pro) + AMP + diphosphate. Functionally, catalyzes the attachment of proline to tRNA(Pro) in a two-step reaction: proline is first activated by ATP to form Pro-AMP and then transferred to the acceptor end of tRNA(Pro). The sequence is that of Proline--tRNA ligase from Methanothrix thermoacetophila (strain DSM 6194 / JCM 14653 / NBRC 101360 / PT) (Methanosaeta thermophila).